A 232-amino-acid chain; its full sequence is Secreted LysM effector Mg3LysM (232 aa).

Residues 1 to 16 form the signal peptide; sequence MQNIFLAATLLGAAFA. A LysM 1 domain is found at 47–91; the sequence is TNYTVKAGDTLGAIAKQYNSGVCDIAKVNGIDNPDYIKPDQVLSI. Residues N48, N100, N138, N195, N209, and N227 are each glycosylated (N-linked (GlcNAc...) asparagine). 2 consecutive LysM domains span residues 120 to 165 and 177 to 221; these read STYT…VINT and GTYV…IIIL.

The protein belongs to the secreted LysM effector family.

Secreted effector that enables the plant pathogenic fungus to manipulate host defenses for successful infection. Binds chitin fragments and blocks the activation of chitin-induced plant defense responses. Protects fungal hyphae against hydrolytic plant enzymes. The polypeptide is Secreted LysM effector Mg3LysM (Zymoseptoria tritici (strain CBS 115943 / IPO323) (Speckled leaf blotch fungus)).